The chain runs to 360 residues: UDP-3-O-acylglucosamine N-acyltransferase (360 aa).

His-256 functions as the Proton acceptor in the catalytic mechanism. Positions 341–360 (EGSGAETAARPDDDRDEGRG) are disordered. The span at 349 to 360 (ARPDDDRDEGRG) shows a compositional bias: basic and acidic residues.

It belongs to the transferase hexapeptide repeat family. LpxD subfamily. As to quaternary structure, homotrimer.

It catalyses the reaction a UDP-3-O-[(3R)-3-hydroxyacyl]-alpha-D-glucosamine + a (3R)-hydroxyacyl-[ACP] = a UDP-2-N,3-O-bis[(3R)-3-hydroxyacyl]-alpha-D-glucosamine + holo-[ACP] + H(+). The protein operates within bacterial outer membrane biogenesis; LPS lipid A biosynthesis. Its function is as follows. Catalyzes the N-acylation of UDP-3-O-acylglucosamine using 3-hydroxyacyl-ACP as the acyl donor. Is involved in the biosynthesis of lipid A, a phosphorylated glycolipid that anchors the lipopolysaccharide to the outer membrane of the cell. The protein is UDP-3-O-acylglucosamine N-acyltransferase of Rhodopseudomonas palustris (strain ATCC BAA-98 / CGA009).